The following is a 93-amino-acid chain: Alpha-defensin 1 (93 aa).

A signal peptide spans 1 to 19 (MKKLVLLFALVLLGFQVQA). Residues 20-58 (DSIQNTDEETKTEEQPGEEDQAVSVSFGDPEGTSLQEES) constitute a propeptide that is removed on maturation. The segment at 24-54 (NTDEETKTEEQPGEEDQAVSVSFGDPEGTSL) is disordered. Disulfide bonds link cysteine 64–cysteine 92, cysteine 66–cysteine 81, and cysteine 71–cysteine 91.

It belongs to the alpha-defensin family. In terms of tissue distribution, paneth cells of the small bowel.

It localises to the secreted. Functionally, probably contributes to the antimicrobial barrier function of the small bowel mucosa. Has antibacterial activity against attenuated mutants of S.typhimurium. In Mus musculus (Mouse), this protein is Alpha-defensin 1 (Defa1).